The following is a 360-amino-acid chain: UDP-3-O-acylglucosamine N-acyltransferase (360 aa).

Histidine 253 (proton acceptor) is an active-site residue.

Belongs to the transferase hexapeptide repeat family. LpxD subfamily. Homotrimer.

It carries out the reaction a UDP-3-O-[(3R)-3-hydroxyacyl]-alpha-D-glucosamine + a (3R)-hydroxyacyl-[ACP] = a UDP-2-N,3-O-bis[(3R)-3-hydroxyacyl]-alpha-D-glucosamine + holo-[ACP] + H(+). The protein operates within bacterial outer membrane biogenesis; LPS lipid A biosynthesis. Its function is as follows. Catalyzes the N-acylation of UDP-3-O-acylglucosamine using 3-hydroxyacyl-ACP as the acyl donor. Is involved in the biosynthesis of lipid A, a phosphorylated glycolipid that anchors the lipopolysaccharide to the outer membrane of the cell. This is UDP-3-O-acylglucosamine N-acyltransferase from Burkholderia multivorans (strain ATCC 17616 / 249).